The primary structure comprises 566 residues: Proline--tRNA ligase (566 aa).

Belongs to the class-II aminoacyl-tRNA synthetase family. ProS type 1 subfamily. In terms of assembly, homodimer.

It is found in the cytoplasm. The enzyme catalyses tRNA(Pro) + L-proline + ATP = L-prolyl-tRNA(Pro) + AMP + diphosphate. Its function is as follows. Catalyzes the attachment of proline to tRNA(Pro) in a two-step reaction: proline is first activated by ATP to form Pro-AMP and then transferred to the acceptor end of tRNA(Pro). As ProRS can inadvertently accommodate and process non-cognate amino acids such as alanine and cysteine, to avoid such errors it has two additional distinct editing activities against alanine. One activity is designated as 'pretransfer' editing and involves the tRNA(Pro)-independent hydrolysis of activated Ala-AMP. The other activity is designated 'posttransfer' editing and involves deacylation of mischarged Ala-tRNA(Pro). The misacylated Cys-tRNA(Pro) is not edited by ProRS. This Bacillus cytotoxicus (strain DSM 22905 / CIP 110041 / 391-98 / NVH 391-98) protein is Proline--tRNA ligase.